We begin with the raw amino-acid sequence, 330 residues long: MTLIVTGAAGFIGANIVKALNERGETRIIAVDNLTRADKFKNLVDCEIDDYLDKTEFVERFARSDFGKVRAVFHEGACSDTMETDGRYMMDNNFRYSRAVLDACLAQGTQFLYASSAAIYGGSSRFVEAREFEAPLNVYGYSKFLFDQVIRRVMPSAKSQIAGFRYFNVYGPRESHKGRMASVAFHNFNQFRAEGKVKLFGEYNGYGPGEQTRDFVSVEDVAKVNLHFFDHPQKSGIFNLGAGRAQPFNDIATTVVNTLRALEGQPALTLAEQVEQGLVEYVPFPDALRGKYQCFTQADQTKLRAAGYDAPFLTVQEGVDRYVRWLFGQL.

NADP(+) is bound by residues 11-12 (FI), 32-33 (DN), K39, K54, 75-79 (EGACS), and N92. Y139 serves as the catalytic Proton acceptor. NADP(+) is bound at residue K143. A substrate-binding site is contributed by N168. NADP(+) contacts are provided by V169 and K177. The active-site Proton acceptor is the K177. Residues R179, H186, 200 to 203 (FGEY), R213, and Y292 each bind substrate.

The protein belongs to the NAD(P)-dependent epimerase/dehydratase family. HldD subfamily. As to quaternary structure, homopentamer. NADP(+) is required as a cofactor.

It carries out the reaction ADP-D-glycero-beta-D-manno-heptose = ADP-L-glycero-beta-D-manno-heptose. Its pathway is nucleotide-sugar biosynthesis; ADP-L-glycero-beta-D-manno-heptose biosynthesis; ADP-L-glycero-beta-D-manno-heptose from D-glycero-beta-D-manno-heptose 7-phosphate: step 4/4. Catalyzes the interconversion between ADP-D-glycero-beta-D-manno-heptose and ADP-L-glycero-beta-D-manno-heptose via an epimerization at carbon 6 of the heptose. In Burkholderia pseudomallei (strain 1026b), this protein is ADP-L-glycero-D-manno-heptose-6-epimerase.